The sequence spans 247 residues: PF03932 family protein CutC (247 aa).

Belongs to the CutC family.

The protein localises to the cytoplasm. The protein is PF03932 family protein CutC of Chromobacterium violaceum (strain ATCC 12472 / DSM 30191 / JCM 1249 / CCUG 213 / NBRC 12614 / NCIMB 9131 / NCTC 9757 / MK).